A 207-amino-acid polypeptide reads, in one-letter code: Holliday junction branch migration complex subunit RuvA (207 aa).

Positions 1 to 71 (MIVSIAGKLV…RLTPRLIGFS (71 aa)) are domain I. A domain II region spans residues 72–149 (TLPERQFFDL…RFALMVAGGE (78 aa)). A flexible linker region spans residues 150 to 155 (VADAME). Residues 156–207 (VESPIVSDTYDALVTLGHSESDARKLIDETLATGKKFKDTESLLTAIYQRSK) form a domain III region.

This sequence belongs to the RuvA family. In terms of assembly, homotetramer. Forms an RuvA(8)-RuvB(12)-Holliday junction (HJ) complex. HJ DNA is sandwiched between 2 RuvA tetramers; dsDNA enters through RuvA and exits via RuvB. An RuvB hexamer assembles on each DNA strand where it exits the tetramer. Each RuvB hexamer is contacted by two RuvA subunits (via domain III) on 2 adjacent RuvB subunits; this complex drives branch migration. In the full resolvosome a probable DNA-RuvA(4)-RuvB(12)-RuvC(2) complex forms which resolves the HJ.

Its subcellular location is the cytoplasm. The RuvA-RuvB-RuvC complex processes Holliday junction (HJ) DNA during genetic recombination and DNA repair, while the RuvA-RuvB complex plays an important role in the rescue of blocked DNA replication forks via replication fork reversal (RFR). RuvA specifically binds to HJ cruciform DNA, conferring on it an open structure. The RuvB hexamer acts as an ATP-dependent pump, pulling dsDNA into and through the RuvAB complex. HJ branch migration allows RuvC to scan DNA until it finds its consensus sequence, where it cleaves and resolves the cruciform DNA. In Rhodopirellula baltica (strain DSM 10527 / NCIMB 13988 / SH1), this protein is Holliday junction branch migration complex subunit RuvA.